Reading from the N-terminus, the 62-residue chain is Photosystem II reaction center protein Z (62 aa).

The next 2 membrane-spanning stretches (helical) occupy residues 8-28 and 41-61; these read AVFA…VVFA and FSGT…NSLI.

It belongs to the PsbZ family. As to quaternary structure, PSII is composed of 1 copy each of membrane proteins PsbA, PsbB, PsbC, PsbD, PsbE, PsbF, PsbH, PsbI, PsbJ, PsbK, PsbL, PsbM, PsbT, PsbY, PsbZ, Psb30/Ycf12, at least 3 peripheral proteins of the oxygen-evolving complex and a large number of cofactors. It forms dimeric complexes.

It localises to the plastid. It is found in the chloroplast thylakoid membrane. In terms of biological role, may control the interaction of photosystem II (PSII) cores with the light-harvesting antenna, regulates electron flow through the 2 photosystem reaction centers. PSII is a light-driven water plastoquinone oxidoreductase, using light energy to abstract electrons from H(2)O, generating a proton gradient subsequently used for ATP formation. The sequence is that of Photosystem II reaction center protein Z from Pisum sativum (Garden pea).